Here is a 394-residue protein sequence, read N- to C-terminus: Ribulose bisphosphate carboxylase large chain (394 aa).

The residue at position 5 (K5) is an N6,N6,N6-trimethyllysine. Positions 114 and 164 each coordinate substrate. K166 functions as the Proton acceptor in the catalytic mechanism. Residue K168 participates in substrate binding. Positions 192, 194, and 195 each coordinate Mg(2+). Position 192 is an N6-carboxylysine (K192). The Proton acceptor role is filled by H285. Substrate is bound by residues R286, H318, and S370.

The protein belongs to the RuBisCO large chain family. Type I subfamily. In terms of assembly, heterohexadecamer of 8 large chains and 8 small chains; disulfide-linked. The disulfide link is formed within the large subunit homodimers. Requires Mg(2+) as cofactor. The disulfide bond which can form in the large chain dimeric partners within the hexadecamer appears to be associated with oxidative stress and protein turnover.

The protein resides in the plastid. It localises to the chloroplast. The enzyme catalyses 2 (2R)-3-phosphoglycerate + 2 H(+) = D-ribulose 1,5-bisphosphate + CO2 + H2O. It carries out the reaction D-ribulose 1,5-bisphosphate + O2 = 2-phosphoglycolate + (2R)-3-phosphoglycerate + 2 H(+). RuBisCO catalyzes two reactions: the carboxylation of D-ribulose 1,5-bisphosphate, the primary event in carbon dioxide fixation, as well as the oxidative fragmentation of the pentose substrate in the photorespiration process. Both reactions occur simultaneously and in competition at the same active site. The chain is Ribulose bisphosphate carboxylase large chain (rbcL) from Nelumbo lutea (American lotus).